A 268-amino-acid chain; its full sequence is Aliphatic sulfonates import ATP-binding protein SsuB 3 (268 aa).

Residues 1–27 (MTAAEAPLPPLAPRERTATTAAERRTG) are disordered. Residues 13–26 (PRERTATTAAERRT) show a composition bias toward basic and acidic residues. Residues 32 to 247 (VSLSGVRKSF…DRNDPEALRY (216 aa)) enclose the ABC transporter domain. 64-71 (GPSGTGKT) contributes to the ATP binding site.

This sequence belongs to the ABC transporter superfamily. Aliphatic sulfonates importer (TC 3.A.1.17.2) family. The complex is composed of two ATP-binding proteins (SsuB), two transmembrane proteins (SsuC) and a solute-binding protein (SsuA).

It localises to the cell membrane. The enzyme catalyses ATP + H2O + aliphatic sulfonate-[sulfonate-binding protein]Side 1 = ADP + phosphate + aliphatic sulfonateSide 2 + [sulfonate-binding protein]Side 1.. Part of the ABC transporter complex SsuABC involved in aliphatic sulfonates import. Responsible for energy coupling to the transport system. This Rhodococcus jostii (strain RHA1) protein is Aliphatic sulfonates import ATP-binding protein SsuB 3.